Here is a 134-residue protein sequence, read N- to C-terminus: Small ribosomal subunit protein uS12 (134 aa).

Residue Asp89 is modified to 3-methylthioaspartic acid. The segment at 109-134 is disordered; that stretch reads KRNVSRSKYGAKKGKAGAAPTTGKKK. Positions 111–123 are enriched in basic residues; sequence NVSRSKYGAKKGK. Residues 124–134 are compositionally biased toward low complexity; sequence AGAAPTTGKKK.

The protein belongs to the universal ribosomal protein uS12 family. Part of the 30S ribosomal subunit. Contacts proteins S8 and S17. May interact with IF1 in the 30S initiation complex.

Its function is as follows. With S4 and S5 plays an important role in translational accuracy. Functionally, interacts with and stabilizes bases of the 16S rRNA that are involved in tRNA selection in the A site and with the mRNA backbone. Located at the interface of the 30S and 50S subunits, it traverses the body of the 30S subunit contacting proteins on the other side and probably holding the rRNA structure together. The combined cluster of proteins S8, S12 and S17 appears to hold together the shoulder and platform of the 30S subunit. This chain is Small ribosomal subunit protein uS12, found in Wolinella succinogenes (strain ATCC 29543 / DSM 1740 / CCUG 13145 / JCM 31913 / LMG 7466 / NCTC 11488 / FDC 602W) (Vibrio succinogenes).